A 92-amino-acid polypeptide reads, in one-letter code: Putative phosphotransferase enzyme IIB component BB_0367 (92 aa).

Positions 10–92 constitute a PTS EIIB type-1 domain; that stretch reads IKVAEHIVEC…ILYMMNEQKQ (83 aa).

The protein localises to the cytoplasm. In terms of biological role, the phosphoenolpyruvate-dependent sugar phosphotransferase system (PTS), a major carbohydrate active -transport system, catalyzes the phosphorylation of incoming sugar substrates concomitant with their translocation across the cell membrane. This chain is Putative phosphotransferase enzyme IIB component BB_0367, found in Borreliella burgdorferi (strain ATCC 35210 / DSM 4680 / CIP 102532 / B31) (Borrelia burgdorferi).